We begin with the raw amino-acid sequence, 95 residues long: Aspartyl/glutamyl-tRNA(Asn/Gln) amidotransferase subunit C (95 aa).

This sequence belongs to the GatC family. In terms of assembly, heterotrimer of A, B and C subunits.

The enzyme catalyses L-glutamyl-tRNA(Gln) + L-glutamine + ATP + H2O = L-glutaminyl-tRNA(Gln) + L-glutamate + ADP + phosphate + H(+). It carries out the reaction L-aspartyl-tRNA(Asn) + L-glutamine + ATP + H2O = L-asparaginyl-tRNA(Asn) + L-glutamate + ADP + phosphate + 2 H(+). In terms of biological role, allows the formation of correctly charged Asn-tRNA(Asn) or Gln-tRNA(Gln) through the transamidation of misacylated Asp-tRNA(Asn) or Glu-tRNA(Gln) in organisms which lack either or both of asparaginyl-tRNA or glutaminyl-tRNA synthetases. The reaction takes place in the presence of glutamine and ATP through an activated phospho-Asp-tRNA(Asn) or phospho-Glu-tRNA(Gln). The sequence is that of Aspartyl/glutamyl-tRNA(Asn/Gln) amidotransferase subunit C from Rhizobium etli (strain ATCC 51251 / DSM 11541 / JCM 21823 / NBRC 15573 / CFN 42).